An 804-amino-acid polypeptide reads, in one-letter code: Ribonucleoside-diphosphate reductase large subunit-like protein (804 aa).

Belongs to the ribonucleoside diphosphate reductase large chain family. The genome of human herpesvirus-6 does not code for a ribonucleotide reductase small subunit.

The protein localises to the virion. Its subcellular location is the host cytoplasm. In terms of biological role, does not possess a ribonucleotide reductase activity. Betaherpesviruses probably use another strategy to expand the dNTP pool in a quiescent host cell. This Human herpesvirus 6B (strain Z29) (HHV-6 variant B) protein is Ribonucleoside-diphosphate reductase large subunit-like protein.